We begin with the raw amino-acid sequence, 274 residues long: ATP synthase subunit delta (274 aa).

It belongs to the ATPase delta chain family. In terms of assembly, F-type ATPases have 2 components, F(1) - the catalytic core - and F(0) - the membrane proton channel. F(1) has five subunits: alpha(3), beta(3), gamma(1), delta(1), epsilon(1). F(0) has three main subunits: a(1), b(2) and c(10-14). The alpha and beta chains form an alternating ring which encloses part of the gamma chain. F(1) is attached to F(0) by a central stalk formed by the gamma and epsilon chains, while a peripheral stalk is formed by the delta and b chains.

It localises to the cell membrane. In terms of biological role, f(1)F(0) ATP synthase produces ATP from ADP in the presence of a proton or sodium gradient. F-type ATPases consist of two structural domains, F(1) containing the extramembraneous catalytic core and F(0) containing the membrane proton channel, linked together by a central stalk and a peripheral stalk. During catalysis, ATP synthesis in the catalytic domain of F(1) is coupled via a rotary mechanism of the central stalk subunits to proton translocation. This protein is part of the stalk that links CF(0) to CF(1). It either transmits conformational changes from CF(0) to CF(1) or is implicated in proton conduction. The polypeptide is ATP synthase subunit delta (Salinispora tropica (strain ATCC BAA-916 / DSM 44818 / JCM 13857 / NBRC 105044 / CNB-440)).